A 417-amino-acid chain; its full sequence is 3-ketoacyl-CoA thiolase, peroxisomal (417 aa).

A peroxisome-targeting transit peptide spans 1–15; it reads MSQRLQSIKDHLVES. Residues 1-15 are PTS2-type peroxisomal targeting signal; the sequence is MSQRLQSIKDHLVES. Residue C125 is the Acyl-thioester intermediate of the active site. Active-site proton acceptor residues include H375 and C403.

It belongs to the thiolase-like superfamily. Thiolase family. As to quaternary structure, homodimer. Interacts (via PTS2-type peroxisomal targeting signal region) with PEX7; leading to its translocation into peroxisomes.

The protein localises to the peroxisome. It localises to the mitochondrion intermembrane space. It carries out the reaction an acyl-CoA + acetyl-CoA = a 3-oxoacyl-CoA + CoA. The protein operates within lipid metabolism; fatty acid metabolism. Responsible for the thiolytic cleavage of straight chain 3-keto fatty acyl-CoAs (3-oxoacyl-CoAs). The protein is 3-ketoacyl-CoA thiolase, peroxisomal (POT1) of Saccharomyces cerevisiae (strain ATCC 204508 / S288c) (Baker's yeast).